A 703-amino-acid polypeptide reads, in one-letter code: Ubiquitin-like modifier-activating enzyme ATG7 (703 aa).

Alanine 2 bears the N-acetylalanine mark. Positions phenylalanine 15–proline 17 match the FAP motif motif. Residue lysine 45 forms a Glycyl lysine isopeptide (Lys-Gly) (interchain with G-Cter in ubiquitin) linkage. Cysteine 572 (glycyl thioester intermediate) is an active-site residue. Serine 698 is subject to Phosphoserine.

Belongs to the ATG7 family. Homodimer. Interacts with ATG3; this interaction is essential for the transfer of ATG8-like proteins's thioester from ATG7 to ATG3 and plays a role in the conjugation of ATG12 to ATG5. Interacts with ATG12. Forms intermediate conjugates with GABARAPL1. Forms intermediate conjugates with ATG8-like proteins such as GABARAP, GABARAPL2 or MAP1LC3A. Interacts with EP300 acetyltransferase. Interacts with FOXO1. Post-translationally, acetylated by EP300. In terms of processing, polyubiquitinated on Lys-45 via 'Lys-63'-linked ubiquitin by TRIM32; this modification positiely regulates ATG8 and ATG12 activating enzyme activity leading to initiation of autophagy under metabolic stress. Widely expressed, especially in kidney, liver, lymph nodes and bone marrow.

Its subcellular location is the cytoplasm. The protein resides in the preautophagosomal structure. Functionally, E1-like activating enzyme involved in the 2 ubiquitin-like systems required for cytoplasm to vacuole transport (Cvt) and autophagy. Activates ATG12 for its conjugation with ATG5 as well as the ATG8 family proteins for their conjugation with phosphatidylethanolamine. Both systems are needed for the ATG8 association to Cvt vesicles and autophagosomes membranes. Required for autophagic death induced by caspase-8 inhibition. Facilitates LC3-I lipidation with phosphatidylethanolamine to form LC3-II which is found on autophagosomal membranes. Required for mitophagy which contributes to regulate mitochondrial quantity and quality by eliminating the mitochondria to a basal level to fulfill cellular energy requirements and preventing excess ROS production. Modulates p53/TP53 activity to regulate cell cycle and survival during metabolic stress. Also plays a key role in the maintenance of axonal homeostasis, the prevention of axonal degeneration, the maintenance of hematopoietic stem cells, the formation of Paneth cell granules, as well as in adipose differentiation. Plays a role in regulating the liver clock and glucose metabolism by mediating the autophagic degradation of CRY1 (clock repressor) in a time-dependent manner. The protein is Ubiquitin-like modifier-activating enzyme ATG7 of Homo sapiens (Human).